Consider the following 116-residue polypeptide: Large ribosomal subunit protein bL17 (116 aa).

Belongs to the bacterial ribosomal protein bL17 family. Part of the 50S ribosomal subunit. Contacts protein L32.

The chain is Large ribosomal subunit protein bL17 from Prochlorococcus marinus (strain NATL2A).